Consider the following 568-residue polypeptide: Proline--tRNA ligase (568 aa).

It belongs to the class-II aminoacyl-tRNA synthetase family. ProS type 1 subfamily. In terms of assembly, homodimer.

The protein localises to the cytoplasm. It carries out the reaction tRNA(Pro) + L-proline + ATP = L-prolyl-tRNA(Pro) + AMP + diphosphate. Its function is as follows. Catalyzes the attachment of proline to tRNA(Pro) in a two-step reaction: proline is first activated by ATP to form Pro-AMP and then transferred to the acceptor end of tRNA(Pro). As ProRS can inadvertently accommodate and process non-cognate amino acids such as alanine and cysteine, to avoid such errors it has two additional distinct editing activities against alanine. One activity is designated as 'pretransfer' editing and involves the tRNA(Pro)-independent hydrolysis of activated Ala-AMP. The other activity is designated 'posttransfer' editing and involves deacylation of mischarged Ala-tRNA(Pro). The misacylated Cys-tRNA(Pro) is not edited by ProRS. This is Proline--tRNA ligase from Campylobacter jejuni subsp. jejuni serotype O:6 (strain 81116 / NCTC 11828).